The following is a 148-amino-acid chain: Small ribosomal subunit protein uS12 (148 aa).

Belongs to the universal ribosomal protein uS12 family. In terms of assembly, part of the 30S ribosomal subunit.

With S4 and S5 plays an important role in translational accuracy. Located at the interface of the 30S and 50S subunits. The protein is Small ribosomal subunit protein uS12 of Methanocaldococcus jannaschii (strain ATCC 43067 / DSM 2661 / JAL-1 / JCM 10045 / NBRC 100440) (Methanococcus jannaschii).